The sequence spans 252 residues: Phosphoribosylformylglycinamidine synthase subunit PurQ (252 aa).

In terms of domain architecture, Glutamine amidotransferase type-1 spans 6–237 (VGVVVFPGSN…FAHLAGTKRS (232 aa)). Cysteine 89 serves as the catalytic Nucleophile. Catalysis depends on residues histidine 206 and glutamate 208.

In terms of assembly, part of the FGAM synthase complex composed of 1 PurL, 1 PurQ and 2 PurS subunits.

It localises to the cytoplasm. It carries out the reaction N(2)-formyl-N(1)-(5-phospho-beta-D-ribosyl)glycinamide + L-glutamine + ATP + H2O = 2-formamido-N(1)-(5-O-phospho-beta-D-ribosyl)acetamidine + L-glutamate + ADP + phosphate + H(+). It catalyses the reaction L-glutamine + H2O = L-glutamate + NH4(+). It participates in purine metabolism; IMP biosynthesis via de novo pathway; 5-amino-1-(5-phospho-D-ribosyl)imidazole from N(2)-formyl-N(1)-(5-phospho-D-ribosyl)glycinamide: step 1/2. Its function is as follows. Part of the phosphoribosylformylglycinamidine synthase complex involved in the purines biosynthetic pathway. Catalyzes the ATP-dependent conversion of formylglycinamide ribonucleotide (FGAR) and glutamine to yield formylglycinamidine ribonucleotide (FGAM) and glutamate. The FGAM synthase complex is composed of three subunits. PurQ produces an ammonia molecule by converting glutamine to glutamate. PurL transfers the ammonia molecule to FGAR to form FGAM in an ATP-dependent manner. PurS interacts with PurQ and PurL and is thought to assist in the transfer of the ammonia molecule from PurQ to PurL. In Chlorobaculum parvum (strain DSM 263 / NCIMB 8327) (Chlorobium vibrioforme subsp. thiosulfatophilum), this protein is Phosphoribosylformylglycinamidine synthase subunit PurQ.